Consider the following 37-residue polypeptide: Large ribosomal subunit protein bL36c (37 aa).

This sequence belongs to the bacterial ribosomal protein bL36 family.

Its subcellular location is the plastid. The protein resides in the chloroplast. This chain is Large ribosomal subunit protein bL36c, found in Piper cenocladum (Ant piper).